A 410-amino-acid polypeptide reads, in one-letter code: MDEGIPHLQERQLLEHRDFIGLDYSSLYMCKPKRSLKRDDTKDTYKLPHRLIEKKRRDRINECIAQLKDLLPEHLKLTTLGHLEKAVVLELTLKHLKALTALTEQQHQKIIALQNGERSLKSPVQADLDAFHSGFQTCAKEVLQYLARFESWTPREPRCAQLVSHLHAVATQLLTPQVTPGRGPGRAPCSAGAAAASGSERVARCVPVIQRTQPGTEPEHDTDTDSGYGGEAEQGRAAVKQEPPGDPSAAPKRLKLEARGALLGPEPALLGSLVALGGGAPFAQPAAAPFCLPFYLLSPSAAAYVQPWLDKSGLDKYLYPAAAAPFPLLYPGIPAAAAAAAAAAFPCLSSVLSPPPEKAGSAAGAPFLAHEVAPPGSLRPQHAHSRTHLPHAVNPESSQEDATQPAKDAP.

Lysine 31 participates in a covalent cross-link: Glycyl lysine isopeptide (Lys-Gly) (interchain with G-Cter in SUMO2). The bHLH domain occupies 44 to 99; that stretch reads TYKLPHRLIEKKRRDRINECIAQLKDLLPEHLKLTTLGHLEKAVVLELTLKHLKAL. A Glycyl lysine isopeptide (Lys-Gly) (interchain with G-Cter in SUMO2) cross-link involves residue lysine 121. The Orange domain maps to 131–166; the sequence is FHSGFQTCAKEVLQYLARFESWTPREPRCAQLVSHL. 2 disordered regions span residues 209–251 and 371–410; these read IQRT…SAAP and EVAP…KDAP. A Glycyl lysine isopeptide (Lys-Gly) (interchain with G-Cter in SUMO2) cross-link involves residue lysine 240.

Homodimer. Heterodimer with BHLHE40/DEC1. Interacts with CIART. Interacts with BMAL1 and RXRA. Interacts with NR0B2 and HNF1A. Highly expressed in the caudate putamen, pineal gland, granular cell layer of the cerebellum, olfactory bulb, piriform cortex, hippocampus and hypothalamic nuclei. Moderately expressed in skeletal muscle, heart. Weakly expressed in lung.

It is found in the nucleus. In terms of biological role, transcriptional repressor involved in the regulation of the circadian rhythm by negatively regulating the activity of the clock genes and clock-controlled genes. Acts as the negative limb of a novel autoregulatory feedback loop (DEC loop) which differs from the one formed by the PER and CRY transcriptional repressors (PER/CRY loop). Both these loops are interlocked as it represses the expression of PER1 and in turn is repressed by PER1/2 and CRY1/2. Represses the activity of the circadian transcriptional activator: CLOCK-BMAL1 heterodimer by competing for the binding to E-box elements (5'-CACGTG-3') found within the promoters of its target genes. Negatively regulates its own expression and the expression of DBP and BHLHE41/DEC2. Acts as a corepressor of RXR and the RXR-LXR heterodimers and represses the ligand-induced RXRA/B/G, NR1H3/LXRA, NR1H4 and VDR transactivation activity. Inhibits HNF1A-mediated transactivation of CYP1A2, CYP2E1 and CYP3A11. This Rattus norvegicus (Rat) protein is Class E basic helix-loop-helix protein 41 (Bhlhb3).